A 347-amino-acid polypeptide reads, in one-letter code: MNNRLQPAPCIELDGAQGEGGGQILRTALTLSMLTGTPFRIERIRAGRSKPGLMRQHLTAVQAAAEVSGATVEGAEAGSQALAFAPGPIHGGDYRFAIGTAGSCTLVLQTVLPALWFADAPSTVAVSGGTHNRAAPPVDFLIRAWQPLLARMGVTQTLALKRHGFYPAGGGEVLATVTPCAGRLGALHLTERGALRELSGQGIVANVRPGVARRELEALAARVPGVVGSVRELSPAEGPGNALVLDAVHEHVTEVFTGFGERGVPAEQVAHGVASAALRYLHSTAAVDEYLADQLVLPMALAGAGCFTAVTASPHLTTNIAVIEKFLPVHITVQAERDASVVRVQVN.

Residues glutamine 109 and 290–294 (YLADQ) each bind ATP. Histidine 315 serves as the catalytic Tele-AMP-histidine intermediate.

It belongs to the RNA 3'-terminal cyclase family. Type 1 subfamily.

It localises to the cytoplasm. The enzyme catalyses a 3'-end 3'-phospho-ribonucleotide-RNA + ATP = a 3'-end 2',3'-cyclophospho-ribonucleotide-RNA + AMP + diphosphate. Catalyzes the conversion of 3'-phosphate to a 2',3'-cyclic phosphodiester at the end of RNA. The mechanism of action of the enzyme occurs in 3 steps: (A) adenylation of the enzyme by ATP; (B) transfer of adenylate to an RNA-N3'P to produce RNA-N3'PP5'A; (C) and attack of the adjacent 2'-hydroxyl on the 3'-phosphorus in the diester linkage to produce the cyclic end product. The biological role of this enzyme is unknown but it is likely to function in some aspects of cellular RNA processing. This chain is RNA 3'-terminal phosphate cyclase, found in Ralstonia nicotianae (strain ATCC BAA-1114 / GMI1000) (Ralstonia solanacearum).